The chain runs to 122 residues: Putative syntaxin 6 (122 aa).

The Cytoplasmic portion of the chain corresponds to 1–100 (MSNYRYSKLN…AKLTHLEDES (100 aa)). Residues 31 to 93 (EQIIQEQDDE…DTAMKKMAKL (63 aa)) form the t-SNARE coiled-coil homology domain. Residues 101-121 (SQCKMIMVLSALLFFLVFVLL) traverse the membrane as a helical; Anchor for type IV membrane protein segment. Residue valine 122 is a topological domain, extracellular.

Belongs to the syntaxin family.

It is found in the membrane. SNARE promoting movement of transport vesicles to target membranes. Potentially functions in retrograde trafficking and in the endocytic recycling pathway. This Caenorhabditis elegans protein is Putative syntaxin 6 (syx-6).